The following is a 742-amino-acid chain: Catalase-peroxidase (742 aa).

The segment at Met-1–Asn-43 is disordered. A compositionally biased stretch (polar residues) spans Gly-11–Glu-20. The segment at residues Trp-109–Tyr-231 is a cross-link (tryptophyl-tyrosyl-methioninium (Trp-Tyr) (with M-257)). His-110 functions as the Proton acceptor in the catalytic mechanism. The segment at residues Tyr-231–Met-257 is a cross-link (tryptophyl-tyrosyl-methioninium (Tyr-Met) (with W-109)). His-272 is a heme b binding site.

The protein belongs to the peroxidase family. Peroxidase/catalase subfamily. As to quaternary structure, homodimer or homotetramer. Heme b is required as a cofactor. Post-translationally, formation of the three residue Trp-Tyr-Met cross-link is important for the catalase, but not the peroxidase activity of the enzyme.

It carries out the reaction H2O2 + AH2 = A + 2 H2O. It catalyses the reaction 2 H2O2 = O2 + 2 H2O. Bifunctional enzyme with both catalase and broad-spectrum peroxidase activity. The sequence is that of Catalase-peroxidase from Rhodococcus jostii (strain RHA1).